A 245-amino-acid chain; its full sequence is Phycocyanobilin:ferredoxin oxidoreductase (245 aa).

The protein belongs to the HY2 family.

It carries out the reaction (2R,3Z)-phycocyanobilin + 4 oxidized [2Fe-2S]-[ferredoxin] = biliverdin IXalpha + 4 reduced [2Fe-2S]-[ferredoxin] + 4 H(+). Functionally, catalyzes the four-electron reduction of biliverdin IX-alpha (2-electron reduction at both the A and D rings); the reaction proceeds via an isolatable 2-electron intermediate, 181,182-dihydrobiliverdin. This chain is Phycocyanobilin:ferredoxin oxidoreductase, found in Rippkaea orientalis (strain PCC 8801 / RF-1) (Cyanothece sp. (strain PCC 8801)).